The following is a 276-amino-acid chain: uncharacterized protein (276 aa).

A disordered region spans residues 1-20; the sequence is MMSDEQHQGGDGQTTTNTNT.

This is an uncharacterized protein from Dictyostelium discoideum (Social amoeba).